Here is a 241-residue protein sequence, read N- to C-terminus: Ribose-5-phosphate isomerase A (241 aa).

Substrate-binding positions include 29-32 (TGTT), 84-87 (DGAD), and 97-100 (KGGG). The active-site Proton acceptor is the glutamate 106. Lysine 124 is a binding site for substrate.

The protein belongs to the ribose 5-phosphate isomerase family. Homodimer.

It catalyses the reaction aldehydo-D-ribose 5-phosphate = D-ribulose 5-phosphate. Its pathway is carbohydrate degradation; pentose phosphate pathway; D-ribose 5-phosphate from D-ribulose 5-phosphate (non-oxidative stage): step 1/1. Functionally, catalyzes the reversible conversion of ribose-5-phosphate to ribulose 5-phosphate. This Thermoplasma volcanium (strain ATCC 51530 / DSM 4299 / JCM 9571 / NBRC 15438 / GSS1) protein is Ribose-5-phosphate isomerase A.